The sequence spans 255 residues: Ribonuclease HII (255 aa).

In terms of domain architecture, RNase H type-2 spans 73–255 (LYIGGIDEAG…HRKSFLKNIL (183 aa)). D79, E80, and D171 together coordinate a divalent metal cation.

Belongs to the RNase HII family. Mn(2+) serves as cofactor. Mg(2+) is required as a cofactor.

It localises to the cytoplasm. The enzyme catalyses Endonucleolytic cleavage to 5'-phosphomonoester.. In terms of biological role, endonuclease that specifically degrades the RNA of RNA-DNA hybrids. The sequence is that of Ribonuclease HII from Clostridioides difficile (strain 630) (Peptoclostridium difficile).